The sequence spans 68 residues: MAAMKTSDIRAMSPDQMDDAVANLKKERFNLRFQRATGQLENTSRMREARRDIARIKTIAAQKRDAKK.

This sequence belongs to the universal ribosomal protein uL29 family.

This is Large ribosomal subunit protein uL29 from Nitrobacter hamburgensis (strain DSM 10229 / NCIMB 13809 / X14).